We begin with the raw amino-acid sequence, 562 residues long: Arginine--tRNA ligase (562 aa).

A 'HIGH' region motif is present at residues 121-131 (PNIAKPISMGH).

This sequence belongs to the class-I aminoacyl-tRNA synthetase family. Monomer.

It localises to the cytoplasm. The enzyme catalyses tRNA(Arg) + L-arginine + ATP = L-arginyl-tRNA(Arg) + AMP + diphosphate. This Lactiplantibacillus plantarum (strain ATCC BAA-793 / NCIMB 8826 / WCFS1) (Lactobacillus plantarum) protein is Arginine--tRNA ligase.